Reading from the N-terminus, the 464-residue chain is Fumarate hydratase class II (464 aa).

Substrate contacts are provided by residues 98 to 100 (SGT), 129 to 132 (HPND), 139 to 141 (SSN), and threonine 187. The active-site Proton donor/acceptor is histidine 188. Serine 318 is a catalytic residue. Residues serine 319 and 324 to 326 (KVN) each bind substrate.

It belongs to the class-II fumarase/aspartase family. Fumarase subfamily. In terms of assembly, homotetramer.

It is found in the cytoplasm. It carries out the reaction (S)-malate = fumarate + H2O. Its pathway is carbohydrate metabolism; tricarboxylic acid cycle; (S)-malate from fumarate: step 1/1. Its function is as follows. Involved in the TCA cycle. Catalyzes the stereospecific interconversion of fumarate to L-malate. The sequence is that of Fumarate hydratase class II from Haemophilus influenzae (strain ATCC 51907 / DSM 11121 / KW20 / Rd).